Reading from the N-terminus, the 466-residue chain is Zinc finger and SCAN domain-containing protein 26 (466 aa).

A Glycyl lysine isopeptide (Lys-Gly) (interchain with G-Cter in SUMO2) cross-link involves residue lysine 21. Positions 42 to 124 constitute an SCAN box domain; it reads CKQFRQLRYE…GILEDLQLDR (83 aa). Composition is skewed to basic and acidic residues over residues 124–135 and 163–173; these read RGKAGEQKDSAQ and KPEERGKETRS. The interval 124–182 is disordered; sequence RGKAGEQKDSAQRSRPTVLVGEPAPRREAREQPGCALPQKPEERGKETRSENGNLIAGT. Residues 220–242 form a C2H2-type 1; degenerate zinc finger; the sequence is SQCLETKERLVQNSGLIEHDRAH. 7 C2H2-type zinc fingers span residues 270 to 292, 298 to 320, 326 to 348, 354 to 376, 382 to 404, 410 to 432, and 438 to 460; these read HPCQ…QKIH, YQCK…LRIH, YLCI…QKIH, RECK…QRVH, HHCN…HRIH, FKCN…VRIH, and YKCS…QRHH.

It localises to the nucleus. Its function is as follows. May be involved in transcriptional regulation. This Mus musculus (Mouse) protein is Zinc finger and SCAN domain-containing protein 26 (Zscan26).